A 166-amino-acid chain; its full sequence is Large ribosomal subunit protein uL10 (166 aa).

This sequence belongs to the universal ribosomal protein uL10 family. In terms of assembly, part of the ribosomal stalk of the 50S ribosomal subunit. The N-terminus interacts with L11 and the large rRNA to form the base of the stalk. The C-terminus forms an elongated spine to which L12 dimers bind in a sequential fashion forming a multimeric L10(L12)X complex.

In terms of biological role, forms part of the ribosomal stalk, playing a central role in the interaction of the ribosome with GTP-bound translation factors. In Lysinibacillus sphaericus (strain C3-41), this protein is Large ribosomal subunit protein uL10.